The chain runs to 502 residues: ATP synthase subunit alpha (502 aa).

Residues 115–136 (VDGLGPIHTTKTRPIESPAPGV) are disordered. 169 to 176 (GDRQTGKT) contacts ATP.

It belongs to the ATPase alpha/beta chains family. In terms of assembly, F-type ATPases have 2 components, CF(1) - the catalytic core - and CF(0) - the membrane proton channel. CF(1) has five subunits: alpha(3), beta(3), gamma(1), delta(1), epsilon(1). CF(0) has three main subunits: a(1), b(2) and c(9-12). The alpha and beta chains form an alternating ring which encloses part of the gamma chain. CF(1) is attached to CF(0) by a central stalk formed by the gamma and epsilon chains, while a peripheral stalk is formed by the delta and b chains.

It is found in the cell membrane. The enzyme catalyses ATP + H2O + 4 H(+)(in) = ADP + phosphate + 5 H(+)(out). Its function is as follows. Produces ATP from ADP in the presence of a proton gradient across the membrane. The alpha chain is a regulatory subunit. The protein is ATP synthase subunit alpha of Bacillus cytotoxicus (strain DSM 22905 / CIP 110041 / 391-98 / NVH 391-98).